The chain runs to 127 residues: Small ribosomal subunit protein eS8 (127 aa).

The segment at 1 to 24 (MKWQGKSARKPTGGRLVPARGKRK) is disordered.

The protein belongs to the eukaryotic ribosomal protein eS8 family. In terms of assembly, part of the 30S ribosomal subunit.

This Methanothrix thermoacetophila (strain DSM 6194 / JCM 14653 / NBRC 101360 / PT) (Methanosaeta thermophila) protein is Small ribosomal subunit protein eS8.